Consider the following 253-residue polypeptide: Major prion protein (253 aa).

The signal sequence occupies residues 1–22; the sequence is MANLGCWMLVLFVATWSDLGLC. The interval 23–230 is interaction with GRB2, ERI3 and SYN1; sequence KKRPKPGGWN…ESQAYYQRGS (208 aa). Residues 26–108 are disordered; the sequence is PKPGGWNTGG…WNKPSKPKTS (83 aa). Repeat copies occupy residues 51–59, 60–67, 68–75, 76–83, and 84–91. The 5 X 8 AA tandem repeats of P-H-G-G-G-W-G-Q stretch occupies residues 51-91; the sequence is PQGGGGWGQPHGGGWGQPHGGGWGQPHGGGWGQPHGGGWGQ. Positions 52–95 are enriched in gly residues; it reads QGGGGWGQPHGGGWGQPHGGGWGQPHGGGWGQPHGGGWGQGGGT. The Cu(2+) site is built by His-61, Gly-62, Gly-63, His-69, Gly-70, Gly-71, His-77, Gly-78, Gly-79, His-85, Gly-86, and Gly-87. Residues Cys-179 and Cys-214 are joined by a disulfide bond. N-linked (GlcNAc...) asparagine glycosylation is found at Asn-181 and Asn-197. Ser-230 carries GPI-anchor amidated serine lipidation. The propeptide at 231–253 is removed in mature form; it reads SMVFFSSPPVILLISFLIFLIVG.

Belongs to the prion family. As to quaternary structure, monomer and homodimer. Has a tendency to aggregate into amyloid fibrils containing a cross-beta spine, formed by a steric zipper of superposed beta-strands. Soluble oligomers may represent an intermediate stage on the path to fibril formation. Copper binding may promote oligomerization. Interacts with GRB2, APP, ERI3/PRNPIP and SYN1. Mislocalized cytosolically exposed PrP interacts with MGRN1; this interaction alters MGRN1 subcellular location and causes lysosomal enlargement. Interacts with KIAA1191.

It is found in the cell membrane. The protein resides in the golgi apparatus. Its function is as follows. Its primary physiological function is unclear. Has cytoprotective activity against internal or environmental stresses. May play a role in neuronal development and synaptic plasticity. May be required for neuronal myelin sheath maintenance. May play a role in iron uptake and iron homeostasis. Soluble oligomers are toxic to cultured neuroblastoma cells and induce apoptosis (in vitro). Association with GPC1 (via its heparan sulfate chains) targets PRNP to lipid rafts. Also provides Cu(2+) or Zn(2+) for the ascorbate-mediated GPC1 deaminase degradation of its heparan sulfate side chains. In Trachypithecus francoisi (Francois' leaf monkey), this protein is Major prion protein (PRNP).